The primary structure comprises 897 residues: Alpha-actinin-2 (897 aa).

Residues 1–257 (MNSMNQIETN…IMTYVSCFYH (257 aa)) form an actin-binding region. Calponin-homology (CH) domains are found at residues 41–145 (KQQR…LRFA) and 154–260 (TSAK…HAFA). Spectrin repeat units lie at residues 284 to 394 (RLME…WLLN), 404 to 509 (HLAE…ALER), 519 to 630 (QLHL…SLQE), and 640 to 743 (RLRR…EVET). 2 consecutive EF-hand domains span residues 756–791 (EQMN…MGYD) and 792–827 (LGEA…ETAD). The Ca(2+) site is built by aspartate 769, asparagine 773, aspartate 780, aspartate 805, asparagine 807, and threonine 811.

This sequence belongs to the alpha-actinin family. In terms of assembly, homodimer; antiparallel. Post-translationally, ubiquitinated by FBXL22, leading to proteasomal degradation.

It localises to the cytoplasm. Its subcellular location is the myofibril. It is found in the sarcomere. The protein localises to the z line. Functionally, F-actin cross-linking protein which is thought to anchor actin to a variety of intracellular structures. This is a bundling protein. The chain is Alpha-actinin-2 (ACTN2) from Gallus gallus (Chicken).